We begin with the raw amino-acid sequence, 419 residues long: Oligouridylate-binding protein 1B (419 aa).

RRM domains follow at residues R54–A128 and F139–K217. Residues K217–A257 are disordered. Residue S241 is modified to Phosphoserine. The RRM 3 domain occupies T260 to K335.

In terms of assembly, interacts with UBA1A and UBA2A.

The protein resides in the nucleus. In terms of biological role, heterogeneous nuclear ribonucleoprotein (hnRNP)-like protein that acts as a component of the pre-mRNA processing machinery. Functions to facilitate the nuclear maturation of plant pre-mRNAs. This Arabidopsis thaliana (Mouse-ear cress) protein is Oligouridylate-binding protein 1B (UBP1B).